The following is an 803-amino-acid chain: Leucine--tRNA ligase (803 aa).

The 'HIGH' region signature appears at 40 to 51 (PYPSGAGLHVGH). The short motif at 575–579 (KMSKS) is the 'KMSKS' region element. Lys578 lines the ATP pocket.

This sequence belongs to the class-I aminoacyl-tRNA synthetase family.

The protein resides in the cytoplasm. The catalysed reaction is tRNA(Leu) + L-leucine + ATP = L-leucyl-tRNA(Leu) + AMP + diphosphate. In Listeria monocytogenes serotype 4a (strain HCC23), this protein is Leucine--tRNA ligase.